Reading from the N-terminus, the 96-residue chain is Co-chaperonin GroES 1 (96 aa).

Belongs to the GroES chaperonin family. Heptamer of 7 subunits arranged in a ring. Interacts with the chaperonin GroEL.

Its subcellular location is the cytoplasm. Its function is as follows. Together with the chaperonin GroEL, plays an essential role in assisting protein folding. The GroEL-GroES system forms a nano-cage that allows encapsulation of the non-native substrate proteins and provides a physical environment optimized to promote and accelerate protein folding. GroES binds to the apical surface of the GroEL ring, thereby capping the opening of the GroEL channel. The chain is Co-chaperonin GroES 1 from Vibrio vulnificus (strain CMCP6).